Consider the following 240-residue polypeptide: 1-(5-phosphoribosyl)-5-[(5-phosphoribosylamino)methylideneamino] imidazole-4-carboxamide isomerase 1 (240 aa).

Residue aspartate 8 is the Proton acceptor of the active site. Aspartate 129 serves as the catalytic Proton donor.

It belongs to the HisA/HisF family.

The protein localises to the cytoplasm. The enzyme catalyses 1-(5-phospho-beta-D-ribosyl)-5-[(5-phospho-beta-D-ribosylamino)methylideneamino]imidazole-4-carboxamide = 5-[(5-phospho-1-deoxy-D-ribulos-1-ylimino)methylamino]-1-(5-phospho-beta-D-ribosyl)imidazole-4-carboxamide. It functions in the pathway amino-acid biosynthesis; L-histidine biosynthesis; L-histidine from 5-phospho-alpha-D-ribose 1-diphosphate: step 4/9. This is 1-(5-phosphoribosyl)-5-[(5-phosphoribosylamino)methylideneamino] imidazole-4-carboxamide isomerase 1 from Ruegeria pomeroyi (strain ATCC 700808 / DSM 15171 / DSS-3) (Silicibacter pomeroyi).